The primary structure comprises 120 residues: Large ribosomal subunit protein eL18 (120 aa).

The protein belongs to the eukaryotic ribosomal protein eL18 family. In terms of assembly, part of the 50S ribosomal subunit.

The polypeptide is Large ribosomal subunit protein eL18 (Pyrococcus furiosus (strain ATCC 43587 / DSM 3638 / JCM 8422 / Vc1)).